Consider the following 418-residue polypeptide: Tyrosine--tRNA ligase (418 aa).

Tyr-34 lines the L-tyrosine pocket. A 'HIGH' region motif is present at residues 39–48 (PTADSLHLGH). Residues Tyr-169 and Gln-173 each coordinate L-tyrosine. A 'KMSKS' region motif is present at residues 229 to 233 (KFGKS). Lys-232 contacts ATP. An S4 RNA-binding domain is found at 352-418 (LNIVELLVNA…GKKKNFVLTY (67 aa)).

This sequence belongs to the class-I aminoacyl-tRNA synthetase family. TyrS type 1 subfamily. Homodimer.

The protein localises to the cytoplasm. It carries out the reaction tRNA(Tyr) + L-tyrosine + ATP = L-tyrosyl-tRNA(Tyr) + AMP + diphosphate + H(+). In terms of biological role, catalyzes the attachment of tyrosine to tRNA(Tyr) in a two-step reaction: tyrosine is first activated by ATP to form Tyr-AMP and then transferred to the acceptor end of tRNA(Tyr). The polypeptide is Tyrosine--tRNA ligase (Streptococcus thermophilus (strain ATCC BAA-491 / LMD-9)).